The chain runs to 340 residues: MRSFRAVRNFSTTAKRLSQAPKASTPNASSGNGFVLAFVAAAAGAGAYYYYANSPAAKVETFNATKADYQKVYDAIADKLIEDDDYDDGSYGPVLLRLAWHSSGTYNKSDNKFGSSGGTMRFKPEASHAANNGLVNARNFLKPIHEKFPWISTGDLYTLGGVTAVQELGGPIIPWKRGRVDEPESASPPDGSLPDASQGATHVRNVFNRQGFNDQEMVALIGAHALGRCHKQNSGFEGPWTFSPTMFTNDFYKLLLDDKWQWKKWDGNPQYEDVKTKSLMMLPTDMALATDKNFKKWATAYAKDQDLFFKDFSAAFSKMLNNGVDFPQGTEIWEFKPKNA.

Residues 1–17 (MRSFRAVRNFSTTAKRL) constitute a mitochondrion transit peptide. His-101 serves as the catalytic Proton acceptor. The tract at residues 175–198 (WKRGRVDEPESASPPDGSLPDASQ) is disordered. His-224 contributes to the heme b binding site. Trp-240 (tryptophan radical intermediate) is an active-site residue.

Belongs to the peroxidase family. Cytochrome c peroxidase subfamily. Forms a one-to-one complex with cytochrome c. Heme b is required as a cofactor.

It localises to the mitochondrion matrix. The protein localises to the mitochondrion intermembrane space. The catalysed reaction is 2 Fe(II)-[cytochrome c] + H2O2 + 2 H(+) = 2 Fe(III)-[cytochrome c] + 2 H2O. Its function is as follows. Destroys radicals which are normally produced within the cells and which are toxic to biological systems. This chain is Cytochrome c peroxidase, mitochondrial (CCP1), found in Yarrowia lipolytica (strain CLIB 122 / E 150) (Yeast).